Consider the following 237-residue polypeptide: Sulfhydrogenase 2 subunit delta (237 aa).

[4Fe-4S] cluster is bound by residues Cys11, Cys14, Cys83, Cys132, Cys160, Cys163, Cys170, and Cys179. [3Fe-4S] cluster-binding residues include Cys188, Cys192, Cys199, and Cys202.

Belongs to the [NiFe]/[NiFeSe] hydrogenase small subunit family. In terms of assembly, dimer of heterotetramer of alpha, beta, gamma and delta subunits. The nickel-containing alpha and delta subunits constitute the hydrogenase activity. The beta and gamma subunits (flavin-containing dimer) constitute the sulfur reductase activity. Ni(2+) is required as a cofactor. It depends on [4Fe-4S] cluster as a cofactor. [3Fe-4S] cluster serves as cofactor.

The protein resides in the cytoplasm. It carries out the reaction H2 + NADP(+) = NADPH + H(+). The enzyme catalyses H2 + NAD(+) = NADH + H(+). Functionally, part of a bifunctional enzyme complex that functions as a hydrogen-evolving hydrogenase with sulfur-reducing activity. May play a role in hydrogen cycling during fermentative growth. Activity exhibited with NAD in addition to NADPH. The alpha and delta subunits form the hydrogenase component that catalyzes the reduction of protons to evolve hydrogen. In Pyrococcus furiosus (strain ATCC 43587 / DSM 3638 / JCM 8422 / Vc1), this protein is Sulfhydrogenase 2 subunit delta.